A 305-amino-acid polypeptide reads, in one-letter code: Homeobox protein NANOGP8 (305 aa).

The interval 1–96 (MSVDPACPQS…KEDKVPVKKQ (96 aa)) is disordered. Polar residues predominate over residues 65-82 (SPDSSTSPKGKQPTSAEN). Positions 95–154 (KQKTRTVFSSTQLCVLNDRFQRQKYLSLQQMQELSNILNLSYKQVKTWFQNQRMKSKRWQ) form a DNA-binding region, homeobox. A run of 8 repeats spans residues 196–200 (WSNQT), 201–205 (WNNST), 206–210 (WSNQT), 216–220 (WSNHS), 221–225 (WNTQT), 226–230 (WCTQS), 231–235 (WNNQA), and 236–240 (WNSPF). The interval 196–240 (WSNQTWNNSTWSNQTQNIQSWSNHSWNTQTWCTQSWNNQAWNSPF) is 8 X repeats starting with a Trp in each unit. A sufficient for transactivation activity region spans residues 196–240 (WSNQTWNNSTWSNQTQNIQSWSNHSWNTQTWCTQSWNNQAWNSPF). Residues 241 to 305 (YNCGEESLQS…YSMNMQPEDV (65 aa)) are sufficient for strong transactivation activity.

Belongs to the Nanog homeobox family.

It localises to the nucleus. Functionally, may act as a transcription regulator. When overexpressed, promotes entry of cells into S phase and cell proliferation. The chain is Homeobox protein NANOGP8 (NANOGP8) from Homo sapiens (Human).